Reading from the N-terminus, the 350-residue chain is uncharacterized protein (350 aa).

The OBG-type G domain maps to 171-334; that stretch reads PTVVIAGYPN…LKERLKKIAI (164 aa). GTP-binding positions include 177–184, 219–223, and 286–289; these read GYPNVGKS, DTPGL, and NKID.

Belongs to the TRAFAC class OBG-HflX-like GTPase superfamily. OBG GTPase family. NOG subfamily.

This is an uncharacterized protein from Methanocaldococcus jannaschii (strain ATCC 43067 / DSM 2661 / JAL-1 / JCM 10045 / NBRC 100440) (Methanococcus jannaschii).